We begin with the raw amino-acid sequence, 75 residues long: Translational regulator CsrA (75 aa).

It belongs to the CsrA/RsmA family. Homodimer; the beta-strands of each monomer intercalate to form a hydrophobic core, while the alpha-helices form wings that extend away from the core.

The protein resides in the cytoplasm. In terms of biological role, a translational regulator that binds mRNA to regulate translation initiation and/or mRNA stability. Usually binds in the 5'-UTR at or near the Shine-Dalgarno sequence preventing ribosome-binding, thus repressing translation. Its main target seems to be the major flagellin gene, while its function is anatagonized by FliW. This Exiguobacterium sibiricum (strain DSM 17290 / CCUG 55495 / CIP 109462 / JCM 13490 / 255-15) protein is Translational regulator CsrA.